A 180-amino-acid chain; its full sequence is Thiol:disulfide interchange protein TxlA homolog (180 aa).

Residues 10–26 (LLAVVAIALSAAVYLGF) traverse the membrane as a helical segment. The Thioredoxin domain occupies 34–143 (SLEAQAQRAI…LEQNITALVA (110 aa)). Cys64 and Cys67 are joined by a disulfide.

This sequence belongs to the thioredoxin family.

Its subcellular location is the cell membrane. Its function is as follows. Required for disulfide bond formation in some proteins. Acts by transferring its disulfide bond to other proteins and is reduced in the process. The protein is Thiol:disulfide interchange protein TxlA homolog (txlA) of Synechocystis sp. (strain ATCC 27184 / PCC 6803 / Kazusa).